The following is a 305-amino-acid chain: MSLSASEKEENNKKMAADKAEMGRKKRAMWERKWKRLDIVKAFASLFVHFLCLLAPFNFTWPALRVALIVYTVGGLGITVSYHRNLAHRSFKVPKWLEYFFAYCGLLAIQGDPIDWVSTHRYHHQFTDSDRDPHSPNEGFWFSHLLWLFDTGYLVEKCGRRTNVEDLKRQWYYKFLQRTVLYHILTFGFLLYYFGGLSFLTWGMGIGVAMEHHVTCLINSLCHVWGSRTWKTNDTSRNVWWLSVFSFGESWHNNHHAFESSARQGLEWWQIDISWYIVRFLEIIGLATDVKLPSESQRRRMAMVR.

Residues 1 to 20 (MSLSASEKEENNKKMAADKA) form a disordered region. 2 consecutive transmembrane segments (helical) span residues 39–59 (IVKA…PFNF) and 60–80 (TWPA…GITV). H83, H88, H120, H123, and H124 together coordinate Fe cation. The short motif at 83–88 (HRNLAH) is the Histidine box-1 element. The Histidine box-2 signature appears at 120–124 (HRYHH). Residues 180–200 (VLYHILTFGFLLYYFGGLSFL) form a helical membrane-spanning segment. Fe cation is bound by residues H223, H252, H255, and H256. The Histidine box-3 motif lies at 252-256 (HNNHH). A helical membrane pass occupies residues 268–288 (WWQIDISWYIVRFLEIIGLAT).

The protein belongs to the fatty acid desaturase type 1 family. Fe cation is required as a cofactor. In terms of tissue distribution, strongly expressed in inflorescence meristems, leaves, and flowers, and weakly in roots and seedpods.

It is found in the endoplasmic reticulum membrane. The protein localises to the plastid. It localises to the chloroplast membrane. It functions in the pathway lipid metabolism; polyunsaturated fatty acid biosynthesis. In terms of biological role, involved in delta-9 desaturation of fatty acids. Involved in the production of very-long-chain fatty acids (VLCFAs). May desaturate chloroplastic monogalactosyl diacylglycerol (MGDG) and alter chloroplast membrane fluidity, which is required to prime a cold acclimation response. The sequence is that of Delta-9 acyl-lipid desaturase 1 from Arabidopsis thaliana (Mouse-ear cress).